The primary structure comprises 348 residues: Holliday junction branch migration complex subunit RuvB (348 aa).

Low complexity predominate over residues Met1–Arg10. Positions Met1–Leu37 are disordered. Positions Pro13–Tyr198 are large ATPase domain (RuvB-L). Leu37, Arg38, Gly79, Lys82, Thr83, Thr84, Arg188, Tyr198, and Arg235 together coordinate ATP. Thr83 is a binding site for Mg(2+). The small ATPAse domain (RuvB-S) stretch occupies residues Gly199 to Arg271. Residues His274 to Ala348 form a head domain (RuvB-H) region. Positions 329 and 334 each coordinate DNA.

Belongs to the RuvB family. In terms of assembly, homohexamer. Forms an RuvA(8)-RuvB(12)-Holliday junction (HJ) complex. HJ DNA is sandwiched between 2 RuvA tetramers; dsDNA enters through RuvA and exits via RuvB. An RuvB hexamer assembles on each DNA strand where it exits the tetramer. Each RuvB hexamer is contacted by two RuvA subunits (via domain III) on 2 adjacent RuvB subunits; this complex drives branch migration. In the full resolvosome a probable DNA-RuvA(4)-RuvB(12)-RuvC(2) complex forms which resolves the HJ.

The protein localises to the cytoplasm. It catalyses the reaction ATP + H2O = ADP + phosphate + H(+). Its function is as follows. The RuvA-RuvB-RuvC complex processes Holliday junction (HJ) DNA during genetic recombination and DNA repair, while the RuvA-RuvB complex plays an important role in the rescue of blocked DNA replication forks via replication fork reversal (RFR). RuvA specifically binds to HJ cruciform DNA, conferring on it an open structure. The RuvB hexamer acts as an ATP-dependent pump, pulling dsDNA into and through the RuvAB complex. RuvB forms 2 homohexamers on either side of HJ DNA bound by 1 or 2 RuvA tetramers; 4 subunits per hexamer contact DNA at a time. Coordinated motions by a converter formed by DNA-disengaged RuvB subunits stimulates ATP hydrolysis and nucleotide exchange. Immobilization of the converter enables RuvB to convert the ATP-contained energy into a lever motion, pulling 2 nucleotides of DNA out of the RuvA tetramer per ATP hydrolyzed, thus driving DNA branch migration. The RuvB motors rotate together with the DNA substrate, which together with the progressing nucleotide cycle form the mechanistic basis for DNA recombination by continuous HJ branch migration. Branch migration allows RuvC to scan DNA until it finds its consensus sequence, where it cleaves and resolves cruciform DNA. In Synechococcus sp. (strain CC9605), this protein is Holliday junction branch migration complex subunit RuvB.